A 230-amino-acid polypeptide reads, in one-letter code: CRP-like protein Clp (230 aa).

An a nucleoside 3',5'-cyclic phosphate-binding site is contributed by 18-139 (PSLALDAGTI…APKILYAIGV (122 aa)). In terms of domain architecture, HTH crp-type spans 158–230 (LDVTDRIVRT…GKTVVLYGTR (73 aa)). The H-T-H motif DNA-binding region spans 190 to 209 (RQELARLVGCSREMAGRVLK).

In terms of assembly, homodimer.

Its subcellular location is the cytoplasm. Its activity is regulated as follows. Allosterically inhibited by cyclic di-GMP (c-di-GMP), which binds to Clp and abolishes its ability to bind its target gene promoter. Functionally, global transcriptional regulator that regulates virulence factors production by activating or repressing the expression of a large set of genes in diffusible signal factor (DSF) pathway. This Xanthomonas oryzae pv. oryzae (strain MAFF 311018) protein is CRP-like protein Clp (clp).